The sequence spans 325 residues: Fructose-1,6-bisphosphatase class 1 (325 aa).

Residues E84, D103, L105, and D106 each contribute to the Mg(2+) site. Residues 106 to 109, N196, and K262 each bind substrate; that span reads DGSS. E268 contributes to the Mg(2+) binding site.

This sequence belongs to the FBPase class 1 family. Homotetramer. The cofactor is Mg(2+).

It is found in the cytoplasm. It carries out the reaction beta-D-fructose 1,6-bisphosphate + H2O = beta-D-fructose 6-phosphate + phosphate. Its pathway is carbohydrate biosynthesis; gluconeogenesis. The chain is Fructose-1,6-bisphosphatase class 1 from Shewanella oneidensis (strain ATCC 700550 / JCM 31522 / CIP 106686 / LMG 19005 / NCIMB 14063 / MR-1).